The primary structure comprises 354 residues: Ornithine transcarbamylase, mitochondrial (354 aa).

Residues 1–32 constitute a mitochondrion transit peptide; the sequence is MLFNLRILLNNAAFRNGHNFMVRNFRCGQPLQ. At K70 the chain carries N6-acetyllysine; alternate. K70 bears the N6-succinyllysine; alternate mark. Position 80 is an N6-succinyllysine (K80). Residue K88 is modified to N6-acetyllysine; alternate. Position 88 is an N6-succinyllysine; alternate (K88). 90–93 lines the carbamoyl phosphate pocket; that stretch reads STRT. At S133 the chain carries Phosphoserine. R141 provides a ligand contact to carbamoyl phosphate. K144 carries the post-translational modification N6-acetyllysine; alternate. N6-succinyllysine; alternate is present on K144. H168 and Q171 together coordinate carbamoyl phosphate. N199 provides a ligand contact to L-ornithine. K221, K231, and K238 each carry N6-acetyllysine; alternate. K221, K231, and K238 each carry N6-succinyllysine; alternate. An N6-acetyllysine modification is found at K243. The L-ornithine site is built by D263, S267, and M268. Residues K274 and K289 each carry the N6-succinyllysine modification. K292 carries the post-translational modification N6-acetyllysine; alternate. K292 is modified (N6-succinyllysine; alternate). C303 (proton acceptor) is an active-site residue. 303–304 lines the carbamoyl phosphate pocket; the sequence is CL. Residue K307 is modified to N6-acetyllysine; alternate. K307 carries the N6-succinyllysine; alternate modification. R330 is a binding site for carbamoyl phosphate.

It belongs to the aspartate/ornithine carbamoyltransferase superfamily. OTCase family. In terms of assembly, homotrimer. In terms of processing, acetylation at Lys-88 negatively regulates ornithine carbamoyltransferase activity in response to nutrient signals. As to expression, mainly expressed in liver and intestinal mucosa.

The protein resides in the mitochondrion matrix. The catalysed reaction is carbamoyl phosphate + L-ornithine = L-citrulline + phosphate + H(+). It functions in the pathway nitrogen metabolism; urea cycle; L-citrulline from L-ornithine and carbamoyl phosphate: step 1/1. With respect to regulation, negatively regulated by lysine acetylation. In terms of biological role, catalyzes the second step of the urea cycle, the condensation of carbamoyl phosphate with L-ornithine to form L-citrulline. The urea cycle ensures the detoxification of ammonia by converting it to urea for excretion. This Homo sapiens (Human) protein is Ornithine transcarbamylase, mitochondrial.